Reading from the N-terminus, the 545-residue chain is Chaperonin GroEL 1 (545 aa).

ATP contacts are provided by residues 30 to 33, lysine 51, 87 to 91, glycine 415, 479 to 481, and aspartate 495; these read TLGP, DGTTT, and NAA.

Belongs to the chaperonin (HSP60) family. In terms of assembly, forms a cylinder of 14 subunits composed of two heptameric rings stacked back-to-back. Interacts with the co-chaperonin GroES.

The protein localises to the cytoplasm. The enzyme catalyses ATP + H2O + a folded polypeptide = ADP + phosphate + an unfolded polypeptide.. Together with its co-chaperonin GroES, plays an essential role in assisting protein folding. The GroEL-GroES system forms a nano-cage that allows encapsulation of the non-native substrate proteins and provides a physical environment optimized to promote and accelerate protein folding. The sequence is that of Chaperonin GroEL 1 from Methylococcus capsulatus (strain ATCC 33009 / NCIMB 11132 / Bath).